The primary structure comprises 442 residues: SPRY domain-containing protein 3 (442 aa).

Residues 17-204 (DLNLHYRFLN…VRLHLNAELG (188 aa)) enclose the B30.2/SPRY domain. The segment at 371–394 (EGEEEEEEEEEEEDGEEIEPEHEG) is disordered. Residues 372–390 (GEEEEEEEEEEEDGEEIEP) are compositionally biased toward acidic residues.

This Pongo abelii (Sumatran orangutan) protein is SPRY domain-containing protein 3 (SPRYD3).